We begin with the raw amino-acid sequence, 991 residues long: Integrator complex subunit 10-like protein (991 aa).

Disordered regions lie at residues 180-217 (NNNN…NNNN), 310-345 (YFDE…DIEK), 462-484 (NDYF…SQES), 549-614 (NSSS…GQQP), and 961-991 (EKQY…EMNE). A compositionally biased stretch (low complexity) spans 319 to 333 (KQQQQQQQQQQQQEQ). Over residues 473 to 484 (GGDENDENSQES) the composition is skewed to acidic residues. Positions 549–609 (NSSSGSNGII…NNNNNNNNNN (61 aa)) are enriched in low complexity. The segment covering 964–991 (YSSSNTANNSGVNNSPIHNQNTDVEMNE) has biased composition (polar residues).

Its subcellular location is the nucleus. Functionally, may be a component of the Integrator complex, a complex involved in the small nuclear RNAs (snRNA) U1 and U2 transcription and in their 3'-box-dependent processing. This is Integrator complex subunit 10-like protein from Dictyostelium discoideum (Social amoeba).